We begin with the raw amino-acid sequence, 380 residues long: Kappa-type opioid receptor (380 aa).

Residues 1–57 are Extracellular-facing; the sequence is MDSPIQIFRGEPGPTCAPSACLPPNSSAWFPGWAEPDSNGSAGSEDAQLEPAHISPA. N-linked (GlcNAc...) asparagine glycans are attached at residues Asn25 and Asn39. The helical transmembrane segment at 58–85 threads the bilayer; it reads IPVIITAVYSVVFVVGLVGNSLVMFVII. Residues 86 to 95 lie on the Cytoplasmic side of the membrane; the sequence is RYTKMKTATN. Residues 96 to 119 form a helical membrane-spanning segment; that stretch reads IYIFNLALADALVTTTMPFQSTVY. The Extracellular portion of the chain corresponds to 120-132; that stretch reads LMNSWPFGDVLCK. A disulfide bridge connects residues Cys131 and Cys210. The helical transmembrane segment at 133-154 threads the bilayer; the sequence is IVISIDYYNMFTSIFTLTMMSV. The Cytoplasmic segment spans residues 155–173; that stretch reads DRYIAVCHPVKALDFRTPL. A helical transmembrane segment spans residues 174–196; it reads KAKIINICIWLLSSSVGISAIVL. At 197–222 the chain is on the extracellular side; the sequence is GGTKVREDVDVIECSLQFPDDDYSWW. A helical transmembrane segment spans residues 223 to 247; it reads DLFMKICVFIFAFVIPVLIIIVCYT. At 248 to 274 the chain is on the cytoplasmic side; it reads LMILRLKSVRLLSGSREKDRNLRRITR. The chain crosses the membrane as a helical span at residues 275 to 296; sequence LVLVVVAVFVVCWTPIHIFILV. Residues 297-311 lie on the Extracellular side of the membrane; sequence EALGSTSHSTAALSS. The helical transmembrane segment at 312–333 threads the bilayer; sequence YYFCIALGYTNSSLNPILYAFL. At 334–380 the chain is on the cytoplasmic side; sequence DENFKRCFRDFCFPLKMRMERQSTSRVRNTVQDPAYLRDIDGMNKPV. Cys345 carries S-palmitoyl cysteine lipidation.

The protein belongs to the G-protein coupled receptor 1 family. Interacts with NHERF1. Interacts with GABARAPL1. Detected in brain and placenta.

It localises to the cell membrane. In terms of biological role, G-protein coupled opioid receptor that functions as a receptor for endogenous alpha-neoendorphins and dynorphins, but has low affinity for beta-endorphins. Also functions as a receptor for various synthetic opioids and for the psychoactive diterpene salvinorin A. Ligand binding causes a conformation change that triggers signaling via guanine nucleotide-binding proteins (G proteins) and modulates the activity of down-stream effectors, such as adenylate cyclase. Signaling leads to the inhibition of adenylate cyclase activity. Inhibits neurotransmitter release by reducing calcium ion currents and increasing potassium ion conductance. Plays a role in the perception of pain. Plays a role in mediating reduced physical activity upon treatment with synthetic opioids. Plays a role in the regulation of salivation in response to synthetic opioids. May play a role in arousal and regulation of autonomic and neuroendocrine functions. The chain is Kappa-type opioid receptor (OPRK1) from Homo sapiens (Human).